The sequence spans 228 residues: 2,3-bisphosphoglycerate-dependent phosphoglycerate mutase (228 aa).

Residues 8-15 (RHGQSAWN), 21-22 (TG), R60, 87-90 (ERHY), K98, 114-115 (RR), and 180-181 (GN) each bind substrate. The active-site Tele-phosphohistidine intermediate is the H9. Catalysis depends on E87, which acts as the Proton donor/acceptor.

Belongs to the phosphoglycerate mutase family. BPG-dependent PGAM subfamily. Homodimer.

The enzyme catalyses (2R)-2-phosphoglycerate = (2R)-3-phosphoglycerate. Its pathway is carbohydrate degradation; glycolysis; pyruvate from D-glyceraldehyde 3-phosphate: step 3/5. In terms of biological role, catalyzes the interconversion of 2-phosphoglycerate and 3-phosphoglycerate. The polypeptide is 2,3-bisphosphoglycerate-dependent phosphoglycerate mutase (Rhizorhabdus wittichii (strain DSM 6014 / CCUG 31198 / JCM 15750 / NBRC 105917 / EY 4224 / RW1) (Sphingomonas wittichii)).